Reading from the N-terminus, the 157-residue chain is S-ribosylhomocysteine lyase (157 aa).

Fe cation is bound by residues His-54, His-58, and Cys-126.

This sequence belongs to the LuxS family. As to quaternary structure, homodimer. Requires Fe cation as cofactor.

The catalysed reaction is S-(5-deoxy-D-ribos-5-yl)-L-homocysteine = (S)-4,5-dihydroxypentane-2,3-dione + L-homocysteine. In terms of biological role, involved in the synthesis of autoinducer 2 (AI-2) which is secreted by bacteria and is used to communicate both the cell density and the metabolic potential of the environment. The regulation of gene expression in response to changes in cell density is called quorum sensing. Catalyzes the transformation of S-ribosylhomocysteine (RHC) to homocysteine (HC) and 4,5-dihydroxy-2,3-pentadione (DPD). The sequence is that of S-ribosylhomocysteine lyase from Bacillus pumilus (strain SAFR-032).